The chain runs to 227 residues: Neuromodulin (227 aa).

The disordered stretch occupies residues 1–227 (MLCCMRRTKQ…EDPEADQEHA (227 aa)). S-palmitoyl cysteine attachment occurs at residues C3 and C4. A compositionally biased stretch (basic and acidic residues) spans 9–32 (KQVEKNDEDQKIEQDGVKPEDKAH). An IQ domain is found at 31–60 (AHKAATKIQASFRGHITRKKLKGEKKGDAP). At S41 the chain carries Phosphoserine; by PHK. Over residues 54–84 (EKKGDAPAAEAEAKEKDDAPVADGVEKKEGD) the composition is skewed to basic and acidic residues. Positions 85–97 (GSATTDAAPATSP) are enriched in low complexity. S86 and S96 each carry phosphoserine. Basic and acidic residues predominate over residues 98-127 (KAEEPSKAGDAPSEEKKGEGDAAPSEEKAG). A compositionally biased stretch (low complexity) spans 128 to 139 (SAETESAAKATT). Residue T138 is modified to Phosphothreonine. Phosphoserine is present on residues S142, S144, and S145. A compositionally biased stretch (basic and acidic residues) spans 146 to 158 (KAEDGPAKEEPKQ). Low complexity predominate over residues 159–193 (ADVPAAVTDAAATTPAAEDAATKAAQPPTETAESS). Residue T172 is modified to Phosphothreonine. S192 and S193 each carry phosphoserine; by CK2. Residues 202–215 (VDEAKPKESARQDE) are compositionally biased toward basic and acidic residues. A compositionally biased stretch (acidic residues) spans 216–227 (GKEDPEADQEHA).

The protein belongs to the neuromodulin family. As to quaternary structure, identified in a complex containing FGFR4, NCAM1, CDH2, PLCG1, FRS2, SRC, SHC1, GAP43 and CTTN. Interacts (via IQ domain) with calmodulin. Binds calmodulin with a greater affinity in the absence of Ca(2+) than in its presence. In terms of processing, phosphorylated. Phosphorylation of this protein by a protein kinase C is specifically correlated with certain forms of synaptic plasticity. Post-translationally, palmitoylated by ZDHHC3. Palmitoylation is regulated by ARF6 and is essential for plasma membrane association and axonal and dendritic filopodia induction. Deacylated by LYPLA2. In terms of tissue distribution, expressed in the hippocampus (at protein level). Expressed in the dorsal root ganglion and the spinal cord (at protein level).

Its subcellular location is the cell membrane. The protein localises to the cell projection. It is found in the growth cone membrane. The protein resides in the synapse. It localises to the filopodium membrane. Its subcellular location is the perikaryon. The protein localises to the dendrite. It is found in the axon. The protein resides in the cytoplasm. In terms of biological role, this protein is associated with nerve growth. It is a major component of the motile 'growth cones' that form the tips of elongating axons. Plays a role in axonal and dendritic filopodia induction. This is Neuromodulin (Gap43) from Mus musculus (Mouse).